We begin with the raw amino-acid sequence, 622 residues long: Prolactin receptor (622 aa).

The first 24 residues, 1 to 24 (MKENVASATVFTLLLFLNTCLLNG), serve as a signal peptide directing secretion. Over 25–234 (QLPPGKPEIF…QIPSDFTMND (210 aa)) the chain is Extracellular. 2 Fibronectin type-III domains span residues 27-128 (PPGK…VQPD) and 129-229 (PPLE…IPSD). Cys-36 and Cys-46 are disulfide-bonded. An N-linked (GlcNAc...) asparagine glycan is attached at Asn-59. Cys-75 and Cys-86 are joined by a disulfide. A glycan (N-linked (GlcNAc...) asparagine) is linked at Asn-104. 2 residues coordinate Zn(2+): Asp-211 and His-212. Positions 215 to 219 (WSAWS) match the WSXWS motif motif. An N-linked (GlcNAc...) asparagine glycan is attached at Asn-233. A helical membrane pass occupies residues 235 to 258 (TTVWISVAVLSAVICLIIVWAVAL). The Cytoplasmic portion of the chain corresponds to 259–622 (KGYSMVTCIF…DPACFTHSFH (364 aa)). The Box 1 motif signature appears at 267 to 275 (IFPPVPGPK). Disordered stretches follow at residues 326 to 378 (MSVH…YDPE), 461 to 505 (SSQT…GSAK), and 520 to 545 (ALSL…NNKE). Basic and acidic residues predominate over residues 466–486 (KSREEGKATQQREVESFHSET).

This sequence belongs to the type I cytokine receptor family. Type 1 subfamily. In terms of assembly, homodimer upon hormone binding. Interacts with SMARCA1. Interacts with GH1. Interacts with CSH. Interacts with NEK3 and VAV2 and this interaction is prolactin-dependent. As to expression, expressed in breast, placenta, kidney, liver and pancreas.

The protein localises to the membrane. Its subcellular location is the secreted. In terms of biological role, this is a receptor for the anterior pituitary hormone prolactin (PRL). Acts as a prosurvival factor for spermatozoa by inhibiting sperm capacitation through suppression of SRC kinase activation and stimulation of AKT. Isoform 4 is unable to transduce prolactin signaling. Isoform 6 is unable to transduce prolactin signaling. The sequence is that of Prolactin receptor (PRLR) from Homo sapiens (Human).